A 307-amino-acid chain; its full sequence is Methionyl-tRNA formyltransferase (307 aa).

109-112 (SLLP) contacts (6S)-5,6,7,8-tetrahydrofolate.

Belongs to the Fmt family.

The catalysed reaction is L-methionyl-tRNA(fMet) + (6R)-10-formyltetrahydrofolate = N-formyl-L-methionyl-tRNA(fMet) + (6S)-5,6,7,8-tetrahydrofolate + H(+). Functionally, attaches a formyl group to the free amino group of methionyl-tRNA(fMet). The formyl group appears to play a dual role in the initiator identity of N-formylmethionyl-tRNA by promoting its recognition by IF2 and preventing the misappropriation of this tRNA by the elongation apparatus. This is Methionyl-tRNA formyltransferase from Mycobacteroides abscessus (strain ATCC 19977 / DSM 44196 / CCUG 20993 / CIP 104536 / JCM 13569 / NCTC 13031 / TMC 1543 / L948) (Mycobacterium abscessus).